The primary structure comprises 259 residues: Ras-related protein Rab-34 (259 aa).

Met1 is subject to N-acetylmethionine. GTP is bound by residues Ser62, Val63, Gly64, Lys65, Thr66, Asp78, Tyr81, and Thr84. Thr66 contacts Mg(2+). A Switch 1 motif is present at residues 71–89 (RFCKDTFDKNYKATIGVDF). The Mg(2+) site is built by Thr84 and Asp107. The Switch 2 motif lies at 108 to 127 (TAGQERFKCIASTYYRGAQA). GTP is bound by residues Gly110, Lys167, Asp169, and Ser198. Residue Ser241 is modified to Phosphoserine. Residues Cys257 and Cys258 are each lipidated (S-geranylgeranyl cysteine).

It belongs to the small GTPase superfamily. Rab family. As to quaternary structure, interacts with RILP. The GTP-bound form interacts with REP15. It depends on Mg(2+) as a cofactor.

Its subcellular location is the cytoplasm. It is found in the golgi apparatus. It localises to the cytoplasmic vesicle. The protein localises to the phagosome. The protein resides in the phagosome membrane. Its subcellular location is the cell projection. It is found in the cilium. It localises to the cytoskeleton. The protein localises to the microtubule organizing center. The protein resides in the centrosome. Its subcellular location is the centriole. It catalyses the reaction GTP + H2O = GDP + phosphate + H(+). Regulated by guanine nucleotide exchange factors (GEFs) which promote the exchange of bound GDP for free GTP. Regulated by GTPase activating proteins (GAPs) which increase the GTP hydrolysis activity. Inhibited by GDP dissociation inhibitors (GDIs). Its function is as follows. The small GTPases Rab are key regulators of intracellular membrane trafficking, from the formation of transport vesicles to their fusion with membranes. Rabs cycle between an inactive GDP-bound form and an active GTP-bound form that is able to recruit to membranes different sets of downstream effectors directly responsible for vesicle formation, movement, tethering and fusion. RAB34 transports protein involved in the redistribution of lysosomes to the peri-Golgi region. Plays a role in the maturation of phagosomes that engulf pathogens, such as S.aureus and M.tuberculosis. Plays a role in the fusion of phagosomes with lysosomes. Required for the early steps of intracellular ciliogenesis, the cilium assembly pathway initiated by trafficking and docking of ciliary vesicles to the centrioles in the cytoplasm, followed by axoneme formation in the cytoplasm. After axoneme elongation, the centrioles migrate close to the cell surface so that ciliary vesicles can fuse with the plasma membrane to expose cilia to the extracellular space. It seems dispensable for ciliogenesis via the extracellular pathway where cilium assembly begins after migration and docking of the centriole to the plasma membrane. Also acts as a positive regulator of hedgehog signaling and regulates ciliary function. This is Ras-related protein Rab-34 from Mus musculus (Mouse).